A 339-amino-acid chain; its full sequence is Phenylalanine--tRNA ligase alpha subunit (339 aa).

Glu254 is a Mg(2+) binding site.

It belongs to the class-II aminoacyl-tRNA synthetase family. Phe-tRNA synthetase alpha subunit type 1 subfamily. As to quaternary structure, tetramer of two alpha and two beta subunits. The cofactor is Mg(2+).

Its subcellular location is the cytoplasm. It catalyses the reaction tRNA(Phe) + L-phenylalanine + ATP = L-phenylalanyl-tRNA(Phe) + AMP + diphosphate + H(+). The sequence is that of Phenylalanine--tRNA ligase alpha subunit from Clostridium botulinum (strain Alaska E43 / Type E3).